Consider the following 147-residue polypeptide: Putative nickel-responsive regulator (147 aa).

Residues His76, His87, His89, and Cys95 each contribute to the Ni(2+) site.

It belongs to the transcriptional regulatory CopG/NikR family. Requires Ni(2+) as cofactor.

Transcriptional regulator. This Rhodopseudomonas palustris (strain TIE-1) protein is Putative nickel-responsive regulator.